A 126-amino-acid polypeptide reads, in one-letter code: MSDPRYQVDVSVVTHYLADQSQPEHERFAFAYTITVQNNGEQPARLMSRHWVITDGDGHVEEVRGAGVVGQQPLIGAGKSHTYSSGTVMTTKVGTMQGSYEMVADDGKHFDAIIKPFRLAVPGALH.

In terms of domain architecture, ApaG spans 2–126 (SDPRYQVDVS…FRLAVPGALH (125 aa)).

This chain is Protein ApaG, found in Pseudomonas fluorescens (strain Pf0-1).